Reading from the N-terminus, the 273-residue chain is Large ribosomal subunit protein uL2 (273 aa).

Disordered regions lie at residues 35–54 (DSKS…TRHI) and 222–273 (GMAM…RRNK). Residues 39 to 49 (KSGGRNNNGRI) are compositionally biased toward polar residues. The span at 229-239 (DHPHGGGEGRN) shows a compositional bias: basic and acidic residues. Residues 253–273 (KGFKTRKNKRTDKYIVRRRNK) show a composition bias toward basic residues.

It belongs to the universal ribosomal protein uL2 family. In terms of assembly, part of the 50S ribosomal subunit. Forms a bridge to the 30S subunit in the 70S ribosome.

Functionally, one of the primary rRNA binding proteins. Required for association of the 30S and 50S subunits to form the 70S ribosome, for tRNA binding and peptide bond formation. It has been suggested to have peptidyltransferase activity; this is somewhat controversial. Makes several contacts with the 16S rRNA in the 70S ribosome. The protein is Large ribosomal subunit protein uL2 of Aeromonas salmonicida (strain A449).